The chain runs to 729 residues: Phosphoribosylformylglycinamidine synthase subunit PurL (729 aa).

Residue His42 is part of the active site. ATP is bound by residues Tyr45 and Lys84. Glu86 is a binding site for Mg(2+). Residues 87 to 90 (SHNH) and Arg109 each bind substrate. The active-site Proton acceptor is the His88. Asp110 lines the Mg(2+) pocket. A substrate-binding site is contributed by Gln238. Residue Asp266 participates in Mg(2+) binding. Position 310 to 312 (310 to 312 (ESQ)) interacts with substrate. The ATP site is built by Asp492 and Gly529. Residue Asn530 coordinates Mg(2+). Ser532 lines the substrate pocket.

It belongs to the FGAMS family. In terms of assembly, monomer. Part of the FGAM synthase complex composed of 1 PurL, 1 PurQ and 2 PurS subunits.

The protein resides in the cytoplasm. The catalysed reaction is N(2)-formyl-N(1)-(5-phospho-beta-D-ribosyl)glycinamide + L-glutamine + ATP + H2O = 2-formamido-N(1)-(5-O-phospho-beta-D-ribosyl)acetamidine + L-glutamate + ADP + phosphate + H(+). It functions in the pathway purine metabolism; IMP biosynthesis via de novo pathway; 5-amino-1-(5-phospho-D-ribosyl)imidazole from N(2)-formyl-N(1)-(5-phospho-D-ribosyl)glycinamide: step 1/2. Functionally, part of the phosphoribosylformylglycinamidine synthase complex involved in the purines biosynthetic pathway. Catalyzes the ATP-dependent conversion of formylglycinamide ribonucleotide (FGAR) and glutamine to yield formylglycinamidine ribonucleotide (FGAM) and glutamate. The FGAM synthase complex is composed of three subunits. PurQ produces an ammonia molecule by converting glutamine to glutamate. PurL transfers the ammonia molecule to FGAR to form FGAM in an ATP-dependent manner. PurS interacts with PurQ and PurL and is thought to assist in the transfer of the ammonia molecule from PurQ to PurL. This is Phosphoribosylformylglycinamidine synthase subunit PurL from Campylobacter curvus (strain 525.92).